A 162-amino-acid chain; its full sequence is Phosphopantetheine adenylyltransferase (162 aa).

Serine 11 lines the substrate pocket. ATP-binding positions include 11–12 and histidine 19; that span reads SF. Substrate-binding residues include lysine 43, leucine 75, and arginine 89. ATP is bound by residues 90–92, glutamate 100, and 125–131; these read GLR and YSYLSSS.

Belongs to the bacterial CoaD family. As to quaternary structure, homohexamer. The cofactor is Mg(2+).

The protein localises to the cytoplasm. The catalysed reaction is (R)-4'-phosphopantetheine + ATP + H(+) = 3'-dephospho-CoA + diphosphate. It participates in cofactor biosynthesis; coenzyme A biosynthesis; CoA from (R)-pantothenate: step 4/5. In terms of biological role, reversibly transfers an adenylyl group from ATP to 4'-phosphopantetheine, yielding dephospho-CoA (dPCoA) and pyrophosphate. The sequence is that of Phosphopantetheine adenylyltransferase from Geotalea uraniireducens (strain Rf4) (Geobacter uraniireducens).